Reading from the N-terminus, the 307-residue chain is Ornithine carbamoyltransferase (307 aa).

Carbamoyl phosphate-binding positions include 54 to 57, glutamine 81, arginine 105, and 132 to 135; these read STRT and HPCQ. L-ornithine-binding positions include asparagine 163, aspartate 221, and 225–226; that span reads SM. Carbamoyl phosphate-binding positions include 261–262 and arginine 289; that span reads CL.

The protein belongs to the aspartate/ornithine carbamoyltransferase superfamily. OTCase family.

Its subcellular location is the cytoplasm. It carries out the reaction carbamoyl phosphate + L-ornithine = L-citrulline + phosphate + H(+). It participates in amino-acid biosynthesis; L-arginine biosynthesis; L-arginine from L-ornithine and carbamoyl phosphate: step 1/3. In terms of biological role, reversibly catalyzes the transfer of the carbamoyl group from carbamoyl phosphate (CP) to the N(epsilon) atom of ornithine (ORN) to produce L-citrulline. The sequence is that of Ornithine carbamoyltransferase from Aromatoleum aromaticum (strain DSM 19018 / LMG 30748 / EbN1) (Azoarcus sp. (strain EbN1)).